The sequence spans 490 residues: MSRYGLQKLYINGAYTDSTSGDTFDAVNPANGECIAQLQAANAQDVDKAVAAAKQGQPVWAAMTAMERSRILRRAVDILRDRNDELAAIETADTGKPLSETRSVDIVTGADVLEYYAGLIPALEGQQIPLRGSAFVYTRREPLGVVAGIGAWNYPLQIALWKSAPALAAGNAMIFKPSEVTSLTALKLAGIYTEAGLPAGVFNVLTGSGDQVGQMLTEHPGIAKVSFTGGIASGKKVMANAAGSTLKDVTMELGGKSPLIIFADADLDKAADIAMMANFYSSGQVCTNGTRVFVPLALQAAFEQKIVERVKRIHIGDPSDERTNFGPLVSFQHRDSVMRYIDSGKREGATLLIGGYSLTEGALAHGAYVAPTVFTHCRDDMQIVREEIFGPVMSILSYQSEEEVIRRANDTEYGLAAGVVTQDLNRAHRVIHQLQAGICWINTWGESAPEMPVGGYKHSGVGRENGISTLEHYTQIKSIQVELSSFNSVF.

Asp-93 serves as a coordination point for K(+). 150 to 152 (GAW) serves as a coordination point for NAD(+). Lys-162 (charge relay system) is an active-site residue. Residue 176–179 (KPSE) participates in NAD(+) binding. Position 180 (Val-180) interacts with K(+). An NAD(+)-binding site is contributed by 230–233 (GIAS). Leu-246 lines the K(+) pocket. Glu-252 functions as the Proton acceptor in the catalytic mechanism. NAD(+)-binding residues include Gly-254, Cys-286, and Glu-387. The active-site Nucleophile is the Cys-286. Residue Cys-286 is modified to Cysteine sulfenic acid (-SOH). K(+) is bound by residues Lys-457 and Gly-460. The Charge relay system role is filled by Glu-464.

It belongs to the aldehyde dehydrogenase family. Dimer of dimers. Requires K(+) as cofactor.

It carries out the reaction betaine aldehyde + NAD(+) + H2O = glycine betaine + NADH + 2 H(+). It participates in amine and polyamine biosynthesis; betaine biosynthesis via choline pathway; betaine from betaine aldehyde: step 1/1. Involved in the biosynthesis of the osmoprotectant glycine betaine. Catalyzes the irreversible oxidation of betaine aldehyde to the corresponding acid. This chain is Betaine aldehyde dehydrogenase, found in Yersinia pseudotuberculosis serotype I (strain IP32953).